Reading from the N-terminus, the 189-residue chain is MCDKIFHNLSGKTLVATPYVITKGIYHKSLIYMLSHTEEGAIGLIFNRLVNHVDLKSFFKIKEDKITSQVIVPIYLGGPIEHEKGFFLHSRDYNKNLLLDFHNDLAVSSNLEISEDIAFGQGPKNSLFIVGYTAWKPGQLEEELEKNLWLVMDCNKEFIFADNPENKWHNALKHLGIDEMYFSSQIGNA.

This sequence belongs to the UPF0301 (AlgH) family.

This Rickettsia typhi (strain ATCC VR-144 / Wilmington) protein is UPF0301 protein RT0098.